The following is an 87-amino-acid chain: Cell division topological specificity factor (87 aa).

This sequence belongs to the MinE family.

Its function is as follows. Prevents the cell division inhibition by proteins MinC and MinD at internal division sites while permitting inhibition at polar sites. This ensures cell division at the proper site by restricting the formation of a division septum at the midpoint of the long axis of the cell. In Delftia acidovorans (strain DSM 14801 / SPH-1), this protein is Cell division topological specificity factor.